Consider the following 264-residue polypeptide: Thiamine pyrophosphokinase 1 (264 aa).

Over residues 1-12 (MPLPTMTHSSSF) the composition is skewed to polar residues. The interval 1-27 (MPLPTMTHSSSFLRLPATSSPHPPPAD) is disordered.

The protein belongs to the thiamine pyrophosphokinase family.

Its subcellular location is the cytoplasm. The protein localises to the cytosol. It catalyses the reaction thiamine + ATP = thiamine diphosphate + AMP + H(+). It functions in the pathway cofactor biosynthesis; thiamine diphosphate biosynthesis; thiamine diphosphate from thiamine: step 1/1. Its function is as follows. Catalyzes the phosphorylation of thiamine to thiamine pyrophosphate (TPP). TPP is an active cofactor for enzymes involved in glycolysis and energy production. Plant leaves require high levels of TPP for photosynthesis and carbohydrate metabolism. The sequence is that of Thiamine pyrophosphokinase 1 (TPK1) from Oryza sativa subsp. japonica (Rice).